Reading from the N-terminus, the 505-residue chain is Beta-glucosidase 3 (505 aa).

The first 22 residues, 1–22 (MAAAAAFFCALLFISVQHGVLG), serve as a signal peptide directing secretion. A beta-D-glucoside-binding residues include glutamine 43 and histidine 143. Residue glutamate 189 is the Proton donor of the active site. An intrachain disulfide couples cysteine 208 to cysteine 217. A glycan (N-linked (GlcNAc...) asparagine) is linked at asparagine 221. 2 residues coordinate a beta-D-glucoside: tyrosine 333 and glutamate 405. Residue glutamate 405 is the Nucleophile of the active site. N-linked (GlcNAc...) asparagine glycans are attached at residues asparagine 415 and asparagine 436. 2 residues coordinate a beta-D-glucoside: tryptophan 450 and tyrosine 466.

Belongs to the glycosyl hydrolase 1 family.

The catalysed reaction is Hydrolysis of terminal, non-reducing beta-D-glucosyl residues with release of beta-D-glucose.. The polypeptide is Beta-glucosidase 3 (BGLU3) (Oryza sativa subsp. japonica (Rice)).